The sequence spans 37 residues: Large ribosomal subunit protein bL36c (37 aa).

Belongs to the bacterial ribosomal protein bL36 family.

It is found in the plastid. In Cuscuta exaltata (Tall dodder), this protein is Large ribosomal subunit protein bL36c.